Here is a 426-residue protein sequence, read N- to C-terminus: Pistil-specific extensin-like protein (426 aa).

A signal peptide spans 1 to 23; sequence MAVIISSKVLLIQLFVLVLGSFS. Disordered stretches follow at residues 56–109 and 121–254; these read GPTF…GSKL and NLPD…AAEP. Composition is skewed to pro residues over residues 60–94, 123–161, 168–224, and 231–254; these read VLPPPSPLPSPPPPSPSPPPPSPSPPPPSTIPLIP, PDVPPIGGGPPVNQPKPSSPSPLVKPPPPPPSPCKPSPP, PPQP…PPPP, and LLPPPPPVAYPPVMTPSPSPAAEP. 3 consecutive repeat copies span residues 69–73, 76–80, and 83–87. Residues 69 to 182 form a 4 X 5 AA repeats of S-P(4) region; the sequence is SPPPPSPSPP…PAKQPSPPPP (114 aa). The stretch at 178-182 is repeat 4; that stretch reads SPPPP. Asn310 is a glycosylation site (N-linked (GlcNAc...) asparagine).

In terms of tissue distribution, pistil (stigma and style tissue).

This chain is Pistil-specific extensin-like protein, found in Nicotiana tabacum (Common tobacco).